Here is a 183-residue protein sequence, read N- to C-terminus: Gene BABR protein 2 (183 aa).

The chain is Gene BABR protein 2 from Babesia bovis.